A 417-amino-acid polypeptide reads, in one-letter code: Probable glucuronosyltransferase GUT1 (417 aa).

Residues 1–15 (MGTRRRSARARARPP) are Cytoplasmic-facing. The helical; Signal-anchor for type II membrane protein transmembrane segment at 16–36 (LAMPLAVLLLFACSSGVAAAA) threads the bilayer. The Lumenal segment spans residues 37-417 (AQGIERIKDD…EGTREDLKPW (381 aa)). Asn-144 and Asn-405 each carry an N-linked (GlcNAc...) asparagine glycan.

This sequence belongs to the glycosyltransferase 47 family.

It is found in the golgi apparatus membrane. Its function is as follows. Involved in the synthesis of glucuronoxylan hemicellulose in secondary cell walls. This chain is Probable glucuronosyltransferase GUT1 (GUT1), found in Oryza sativa subsp. japonica (Rice).